Consider the following 193-residue polypeptide: Flagellar transcriptional regulator FlhC (193 aa).

4 residues coordinate Zn(2+): cysteine 138, cysteine 141, cysteine 158, and cysteine 161.

It belongs to the FlhC family. As to quaternary structure, heterohexamer composed of two FlhC and four FlhD subunits. Each FlhC binds a FlhD dimer, forming a heterotrimer, and a hexamer assembles by dimerization of two heterotrimers. Requires Zn(2+) as cofactor.

The protein resides in the cytoplasm. Its function is as follows. Functions in complex with FlhD as a master transcriptional regulator that regulates transcription of several flagellar and non-flagellar operons by binding to their promoter region. Activates expression of class 2 flagellar genes, including fliA, which is a flagellum-specific sigma factor that turns on the class 3 genes. Also regulates genes whose products function in a variety of physiological pathways. This is Flagellar transcriptional regulator FlhC from Proteus mirabilis.